Here is a 344-residue protein sequence, read N- to C-terminus: Methionine import ATP-binding protein MetN (344 aa).

Residues 2–241 (LELKQVGKVY…PQAEVTKAFV (240 aa)) form the ABC transporter domain. Residue 38-45 (GYSGAGKS) coordinates ATP.

This sequence belongs to the ABC transporter superfamily. Methionine importer (TC 3.A.1.24) family. The complex is composed of two ATP-binding proteins (MetN), two transmembrane proteins (MetI) and a solute-binding protein (MetQ).

Its subcellular location is the cell membrane. It catalyses the reaction L-methionine(out) + ATP + H2O = L-methionine(in) + ADP + phosphate + H(+). The enzyme catalyses D-methionine(out) + ATP + H2O = D-methionine(in) + ADP + phosphate + H(+). Functionally, part of the ABC transporter complex MetNIQ involved in methionine import. Responsible for energy coupling to the transport system. This is Methionine import ATP-binding protein MetN from Latilactobacillus sakei subsp. sakei (strain 23K) (Lactobacillus sakei subsp. sakei).